The primary structure comprises 357 residues: 3-isopropylmalate dehydrogenase (357 aa).

Residues Arg-97, Arg-107, Arg-135, and Asp-224 each coordinate substrate. Residues Asp-224, Asp-248, and Asp-252 each coordinate Mg(2+). 282-294 contacts NAD(+); the sequence is GSAPDIAGQDLAN.

The protein belongs to the isocitrate and isopropylmalate dehydrogenases family. LeuB type 1 subfamily. Homodimer. Requires Mg(2+) as cofactor. Mn(2+) is required as a cofactor.

It is found in the cytoplasm. The catalysed reaction is (2R,3S)-3-isopropylmalate + NAD(+) = 4-methyl-2-oxopentanoate + CO2 + NADH. It functions in the pathway amino-acid biosynthesis; L-leucine biosynthesis; L-leucine from 3-methyl-2-oxobutanoate: step 3/4. Catalyzes the oxidation of 3-carboxy-2-hydroxy-4-methylpentanoate (3-isopropylmalate) to 3-carboxy-4-methyl-2-oxopentanoate. The product decarboxylates to 4-methyl-2 oxopentanoate. The chain is 3-isopropylmalate dehydrogenase from Prochlorococcus marinus (strain MIT 9313).